We begin with the raw amino-acid sequence, 134 residues long: MILACDVGLKRIGIAALLNGVILPLEAILRHNRNQASRDLSDLLREKNIQVLVVGKPHESYADTNARIEHFIKLVDFKGEIVFINEDRSSIEAYENLEHLGKKNKRLAIKDGRLDSLSACRILERYCQKVLKNH.

It belongs to the YqgF nuclease family.

Its subcellular location is the cytoplasm. Functionally, could be a nuclease involved in processing of the 5'-end of pre-16S rRNA. The polypeptide is Putative pre-16S rRNA nuclease (Helicobacter pylori (strain ATCC 700392 / 26695) (Campylobacter pylori)).